The primary structure comprises 712 residues: Polyribonucleotide nucleotidyltransferase (712 aa).

Mg(2+) is bound by residues aspartate 487 and aspartate 493. In terms of domain architecture, KH spans 554-613 (PKIITMTINPDKIRDVIGPSGKQINKIIEETGVKIDIEQDGTVFISSINQEMNDKAKKII). The 69-residue stretch at 623 to 691 (GEIYEAKVKR…KQGRVNLSRK (69 aa)) folds into the S1 motif domain.

Belongs to the polyribonucleotide nucleotidyltransferase family. It depends on Mg(2+) as a cofactor.

The protein localises to the cytoplasm. The catalysed reaction is RNA(n+1) + phosphate = RNA(n) + a ribonucleoside 5'-diphosphate. Its function is as follows. Involved in mRNA degradation. Catalyzes the phosphorolysis of single-stranded polyribonucleotides processively in the 3'- to 5'-direction. The sequence is that of Polyribonucleotide nucleotidyltransferase from Bacillus cereus (strain ATCC 14579 / DSM 31 / CCUG 7414 / JCM 2152 / NBRC 15305 / NCIMB 9373 / NCTC 2599 / NRRL B-3711).